A 110-amino-acid polypeptide reads, in one-letter code: MSKNDLVKTLRMNYLFDFYQALLTKKQRNYLELFYLQDYSLSEIADTFDVSRQAVYDNIRRTGDLVEDYETKLELYSKFEQRREIYNQMKASIEDPDALKRYIEELEELE.

Belongs to the UPF0122 family.

Functionally, might take part in the signal recognition particle (SRP) pathway. This is inferred from the conservation of its genetic proximity to ftsY/ffh. May be a regulatory protein. This chain is UPF0122 protein Sca_0859, found in Staphylococcus carnosus (strain TM300).